The sequence spans 250 residues: 5'-nucleotidase SurE (250 aa).

Asp-8, Asp-9, Ser-39, and Asn-95 together coordinate a divalent metal cation.

The protein belongs to the SurE nucleotidase family. A divalent metal cation is required as a cofactor.

It localises to the cytoplasm. The catalysed reaction is a ribonucleoside 5'-phosphate + H2O = a ribonucleoside + phosphate. Nucleotidase that shows phosphatase activity on nucleoside 5'-monophosphates. The sequence is that of 5'-nucleotidase SurE from Cupriavidus pinatubonensis (strain JMP 134 / LMG 1197) (Cupriavidus necator (strain JMP 134)).